The primary structure comprises 622 residues: Chaperone protein HscA homolog (622 aa).

It belongs to the heat shock protein 70 family.

Its function is as follows. Chaperone involved in the maturation of iron-sulfur cluster-containing proteins. Has a low intrinsic ATPase activity which is markedly stimulated by HscB. The sequence is that of Chaperone protein HscA homolog from Burkholderia lata (strain ATCC 17760 / DSM 23089 / LMG 22485 / NCIMB 9086 / R18194 / 383).